Here is a 513-residue protein sequence, read N- to C-terminus: ATP synthase subunit alpha, mitochondrial (513 aa).

170–177 is an ATP binding site; it reads GDRQTGKT.

Belongs to the ATPase alpha/beta chains family. As to quaternary structure, F-type ATPases have 2 components, CF(1) - the catalytic core - and CF(0) - the membrane proton channel. CF(1) has five subunits: alpha(3), beta(3), gamma(1), delta(1), epsilon(1). CF(0) has three main subunits: a, b and c.

The protein localises to the mitochondrion. It is found in the mitochondrion inner membrane. In terms of biological role, mitochondrial membrane ATP synthase (F(1)F(0) ATP synthase or Complex V) produces ATP from ADP in the presence of a proton gradient across the membrane which is generated by electron transport complexes of the respiratory chain. F-type ATPases consist of two structural domains, F(1) - containing the extramembraneous catalytic core, and F(0) - containing the membrane proton channel, linked together by a central stalk and a peripheral stalk. During catalysis, ATP synthesis in the catalytic domain of F(1) is coupled via a rotary mechanism of the central stalk subunits to proton translocation. Subunits alpha and beta form the catalytic core in F(1). Rotation of the central stalk against the surrounding alpha(3)beta(3) subunits leads to hydrolysis of ATP in three separate catalytic sites on the beta subunits. Subunit alpha does not bear the catalytic high-affinity ATP-binding sites. This Marchantia polymorpha (Common liverwort) protein is ATP synthase subunit alpha, mitochondrial (ATPA).